The following is a 440-amino-acid chain: G-protein coupled receptor family C group 5 member C (440 aa).

The N-terminal stretch at 1–22 is a signal peptide; sequence MATHRTLLMCLGLPLFFPGALA. Topologically, residues 23–49 are extracellular; that stretch reads QNHAPPGCSPDLDPLYYNLCDRSGAWG. The chain crosses the membrane as a helical span at residues 50 to 70; it reads IVSEAVAGAGIITTFVLTIIL. Residues 71 to 84 lie on the Cytoplasmic side of the membrane; the sequence is VASLPFVQDTKKRS. Residues 85-105 traverse the membrane as a helical segment; sequence LLGTQVFFLLGTLGLFCLVFA. At 106–119 the chain is on the extracellular side; the sequence is CVVKPDFSTCASRR. The helical transmembrane segment at 120–140 threads the bilayer; the sequence is FLFGVLFAICFSCLVAHVLSL. Residues 141–155 are Cytoplasmic-facing; it reads NFLTRKNHGPRGWVI. A helical transmembrane segment spans residues 156–176; that stretch reads FTVALLLTLVEVIINTEWLII. Topologically, residues 177–207 are extracellular; the sequence is TLVRGGGQVSPLGNVSADSTMTSPCAIANMD. N-linked (GlcNAc...) asparagine glycosylation is present at Asn-190. Residues 208-228 form a helical membrane-spanning segment; that stretch reads FVMALIYVMLLLLTAFLGAWP. The Cytoplasmic segment spans residues 229–240; it reads TLCGRFKRWRKH. A helical membrane pass occupies residues 241-261; it reads GVFVLLTTVISIAIWVVWIVM. At 262–278 the chain is on the extracellular side; that stretch reads YTYGNEQHHSPTWDDPT. A helical transmembrane segment spans residues 279 to 299; the sequence is LAIALAANAWTFVLFYVIPEV. Residues 300–440 lie on the Cytoplasmic side of the membrane; that stretch reads SQVTKPSPEQ…QVFRNPYVWD (141 aa). Ser-343, Ser-382, Ser-402, and Ser-405 each carry phosphoserine. Position 413 is a phosphotyrosine (Tyr-413). Thr-422 carries the phosphothreonine modification.

It belongs to the G-protein coupled receptor 3 family.

It is found in the cell membrane. Functionally, this retinoic acid-inducible G-protein coupled receptor provide evidence for a possible interaction between retinoid and G-protein signaling pathways. This is G-protein coupled receptor family C group 5 member C (Gprc5c) from Mus musculus (Mouse).